The sequence spans 321 residues: Lipoyl synthase (321 aa).

7 residues coordinate [4Fe-4S] cluster: C68, C73, C79, C94, C98, C101, and S308. The Radical SAM core domain maps to 80 to 297 (FNHGTATFMI…KDVAMGLGFS (218 aa)).

Belongs to the radical SAM superfamily. Lipoyl synthase family. The cofactor is [4Fe-4S] cluster.

It is found in the cytoplasm. It catalyses the reaction [[Fe-S] cluster scaffold protein carrying a second [4Fe-4S](2+) cluster] + N(6)-octanoyl-L-lysyl-[protein] + 2 oxidized [2Fe-2S]-[ferredoxin] + 2 S-adenosyl-L-methionine + 4 H(+) = [[Fe-S] cluster scaffold protein] + N(6)-[(R)-dihydrolipoyl]-L-lysyl-[protein] + 4 Fe(3+) + 2 hydrogen sulfide + 2 5'-deoxyadenosine + 2 L-methionine + 2 reduced [2Fe-2S]-[ferredoxin]. It participates in protein modification; protein lipoylation via endogenous pathway; protein N(6)-(lipoyl)lysine from octanoyl-[acyl-carrier-protein]: step 2/2. Catalyzes the radical-mediated insertion of two sulfur atoms into the C-6 and C-8 positions of the octanoyl moiety bound to the lipoyl domains of lipoate-dependent enzymes, thereby converting the octanoylated domains into lipoylated derivatives. The protein is Lipoyl synthase of Aeromonas hydrophila subsp. hydrophila (strain ATCC 7966 / DSM 30187 / BCRC 13018 / CCUG 14551 / JCM 1027 / KCTC 2358 / NCIMB 9240 / NCTC 8049).